We begin with the raw amino-acid sequence, 191 residues long: Elongation factor P-like protein (191 aa).

Belongs to the elongation factor P family.

The protein is Elongation factor P-like protein of Shewanella sediminis (strain HAW-EB3).